The sequence spans 539 residues: Phosphoenolpyruvate carboxykinase (ATP) (539 aa).

R61, Y195, and K201 together coordinate substrate. Residues K201, H220, and 238-246 contribute to the ATP site; that span reads GLSGTGKTT. The Mn(2+) site is built by K201 and H220. D259 is a Mn(2+) binding site. E287, R325, and T450 together coordinate ATP. R325 serves as a coordination point for substrate.

This sequence belongs to the phosphoenolpyruvate carboxykinase (ATP) family. Mn(2+) serves as cofactor.

The protein resides in the cytoplasm. It catalyses the reaction oxaloacetate + ATP = phosphoenolpyruvate + ADP + CO2. It participates in carbohydrate biosynthesis; gluconeogenesis. In terms of biological role, involved in the gluconeogenesis. Catalyzes the conversion of oxaloacetate (OAA) to phosphoenolpyruvate (PEP) through direct phosphoryl transfer between the nucleoside triphosphate and OAA. In Methylobacterium radiotolerans (strain ATCC 27329 / DSM 1819 / JCM 2831 / NBRC 15690 / NCIMB 10815 / 0-1), this protein is Phosphoenolpyruvate carboxykinase (ATP).